A 158-amino-acid polypeptide reads, in one-letter code: Cyclic pyranopterin monophosphate synthase (158 aa).

Substrate is bound by residues 74–76 (MCH) and 112–113 (ME). The active site involves aspartate 127.

This sequence belongs to the MoaC family. Homohexamer; trimer of dimers.

The enzyme catalyses (8S)-3',8-cyclo-7,8-dihydroguanosine 5'-triphosphate = cyclic pyranopterin phosphate + diphosphate. It participates in cofactor biosynthesis; molybdopterin biosynthesis. Its function is as follows. Catalyzes the conversion of (8S)-3',8-cyclo-7,8-dihydroguanosine 5'-triphosphate to cyclic pyranopterin monophosphate (cPMP). The chain is Cyclic pyranopterin monophosphate synthase from Helicobacter pylori (strain ATCC 700392 / 26695) (Campylobacter pylori).